The primary structure comprises 451 residues: Probable phosphoglucosamine mutase (451 aa).

The active-site Phosphoserine intermediate is the S96. Residues S96, D233, D235, and D237 each contribute to the Mg(2+) site. Residue S96 is modified to Phosphoserine.

Belongs to the phosphohexose mutase family. The cofactor is Mg(2+). In terms of processing, activated by phosphorylation.

It carries out the reaction alpha-D-glucosamine 1-phosphate = D-glucosamine 6-phosphate. Catalyzes the conversion of glucosamine-6-phosphate to glucosamine-1-phosphate. In Pyrococcus abyssi (strain GE5 / Orsay), this protein is Probable phosphoglucosamine mutase.